Reading from the N-terminus, the 874-residue chain is Alanine--tRNA ligase (874 aa).

Residues histidine 562, histidine 566, cysteine 665, and histidine 669 each coordinate Zn(2+).

This sequence belongs to the class-II aminoacyl-tRNA synthetase family. Zn(2+) is required as a cofactor.

Its subcellular location is the cytoplasm. The catalysed reaction is tRNA(Ala) + L-alanine + ATP = L-alanyl-tRNA(Ala) + AMP + diphosphate. Functionally, catalyzes the attachment of alanine to tRNA(Ala) in a two-step reaction: alanine is first activated by ATP to form Ala-AMP and then transferred to the acceptor end of tRNA(Ala). Also edits incorrectly charged Ser-tRNA(Ala) and Gly-tRNA(Ala) via its editing domain. The polypeptide is Alanine--tRNA ligase (Pseudomonas putida (strain GB-1)).